The sequence spans 525 residues: Protein translocase subunit SecD (525 aa).

A run of 6 helical transmembrane segments spans residues 9 to 29 (LYLVVLVALGSIYYALPSLLG), 368 to 388 (VLIGGVLVVLFMVLYYKGFGM), 392 to 412 (LAVVLNVTILVSLLALMQATL), 415 to 435 (PGIAGAVLLLGMAVDANVLIF), 460 to 480 (FSTILDANITTLITAVILYQF), and 487 to 507 (GFAVTLSVGLLASMFTAIFVT).

Belongs to the SecD/SecF family. SecD subfamily. Forms a complex with SecF. Part of the essential Sec protein translocation apparatus which comprises SecA, SecYEG and auxiliary proteins SecDF-YajC and YidC.

The protein localises to the cell inner membrane. In terms of biological role, part of the Sec protein translocase complex. Interacts with the SecYEG preprotein conducting channel. SecDF uses the proton motive force (PMF) to complete protein translocation after the ATP-dependent function of SecA. The protein is Protein translocase subunit SecD of Magnetococcus marinus (strain ATCC BAA-1437 / JCM 17883 / MC-1).